Consider the following 389-residue polypeptide: Glutamate 5-kinase (389 aa).

K16 is an ATP binding site. Positions 56, 143, and 155 each coordinate substrate. 175-176 (SD) lines the ATP pocket. Positions 281 to 358 (AGELHVDDGA…AEIETILGYP (78 aa)) constitute a PUA domain.

This sequence belongs to the glutamate 5-kinase family.

The protein resides in the cytoplasm. The enzyme catalyses L-glutamate + ATP = L-glutamyl 5-phosphate + ADP. It functions in the pathway amino-acid biosynthesis; L-proline biosynthesis; L-glutamate 5-semialdehyde from L-glutamate: step 1/2. Catalyzes the transfer of a phosphate group to glutamate to form L-glutamate 5-phosphate. The sequence is that of Glutamate 5-kinase from Rhizobium johnstonii (strain DSM 114642 / LMG 32736 / 3841) (Rhizobium leguminosarum bv. viciae).